Reading from the N-terminus, the 488-residue chain is Adenylosuccinate synthetase 1, chloroplastic (488 aa).

The transit peptide at 1–47 (MSLSTVNHAAAAAAAAAGPGKSFSAAAPAAPSVRLPRTRAPAAAAVS) directs the protein to the chloroplast. GTP is bound by residues 75 to 81 (GDEGKGK) and 103 to 105 (GHT). D76 functions as the Proton acceptor in the catalytic mechanism. The Mg(2+) site is built by D76 and G103. IMP contacts are provided by residues 76–79 (DEGK), 101–104 (NAGH), T193, R207, Q287, T302, and R366. The active-site Proton donor is the H104. Position 362–368 (362–368 (TTTGRPR)) interacts with substrate. GTP-binding positions include R368, 394 to 396 (KLD), and 477 to 479 (GVG).

The protein belongs to the adenylosuccinate synthetase family. Homodimer. Mg(2+) serves as cofactor.

The protein resides in the plastid. Its subcellular location is the chloroplast. The catalysed reaction is IMP + L-aspartate + GTP = N(6)-(1,2-dicarboxyethyl)-AMP + GDP + phosphate + 2 H(+). It participates in purine metabolism; AMP biosynthesis via de novo pathway; AMP from IMP: step 1/2. Its function is as follows. Plays an important role in the de novo pathway and in the salvage pathway of purine nucleotide biosynthesis. Catalyzes the first committed step in the biosynthesis of AMP from IMP. This chain is Adenylosuccinate synthetase 1, chloroplastic, found in Oryza sativa subsp. japonica (Rice).